The primary structure comprises 407 residues: MSNNANNCLPLASYTLAVFPGIPVAPIEQDFPVSVRITMAAIDPARIEGDEEEPATLRILKPADNFDDEDDEDDEDEDDDDEDDEVSAEDMAQIKKLIAANEDGLDEVEGGDDDEDDDEDDEMEFEEDDEDDDDEGEIEDFVVCTLSPKFGYQQTLDLVITPGEQIMFEVTGSYAIHLSGNYIEHPYDMEDEDELLALGEDDEDDEDELDEGEYDLSPDEDEVINGDERLVELMEQDDEDDEDDEDEEEEPVVEPKKILKRAAEEKKQEKAAKKAKVAFTKNLEQGPTPSEPKPKLVTRQLEGGVKIEDRTVGEGPSAKVGSKVGVRYVGKLANGKVFDSNSKGKPFYFSVGKGEVIRGWDIGVQGMKVKGERRIIIPPGMAYGKQKLPGIPPNSQLTFDVKVVNIK.

3 disordered regions span residues 46–136, 191–223, and 236–297; these read RIEG…DDEG, DEDE…EDEV, and QDDE…PKLV. Composition is skewed to acidic residues over residues 65 to 88 and 103 to 136; these read NFDD…EVSA and DGLD…DDEG. Residues 236–252 show a composition bias toward acidic residues; that stretch reads QDDEDDEDDEDEEEEPV. Residues 253-272 are compositionally biased toward basic and acidic residues; that stretch reads VEPKKILKRAAEEKKQEKAA. The 87-residue stretch at 321–407 folds into the PPIase FKBP-type domain; it reads GSKVGVRYVG…TFDVKVVNIK (87 aa).

This sequence belongs to the FKBP-type PPIase family. FKBP3/4 subfamily.

Its subcellular location is the nucleus. The protein resides in the nucleolus. The catalysed reaction is [protein]-peptidylproline (omega=180) = [protein]-peptidylproline (omega=0). Inhibited by both FK506 and rapamycin. In terms of biological role, PPIases accelerate the folding of proteins. It catalyzes the cis-trans isomerization of proline imidic peptide bonds in oligopeptides. This is FK506-binding protein 3 (FPR3) from Yarrowia lipolytica (strain CLIB 122 / E 150) (Yeast).